Reading from the N-terminus, the 103-residue chain is Small ribosomal subunit protein bS18c (103 aa).

This sequence belongs to the bacterial ribosomal protein bS18 family. As to quaternary structure, part of the 30S ribosomal subunit.

The protein localises to the plastid. It is found in the chloroplast. The protein is Small ribosomal subunit protein bS18c (rps18) of Chlorella vulgaris (Green alga).